Reading from the N-terminus, the 208-residue chain is Small ribosomal subunit protein uS4 (208 aa).

One can recognise an S4 RNA-binding domain in the interval 98–160 (CRLDNVVYRM…AKKQSRIQLA (63 aa)).

It belongs to the universal ribosomal protein uS4 family. As to quaternary structure, part of the 30S ribosomal subunit. Contacts protein S5. The interaction surface between S4 and S5 is involved in control of translational fidelity.

Functionally, one of the primary rRNA binding proteins, it binds directly to 16S rRNA where it nucleates assembly of the body of the 30S subunit. In terms of biological role, with S5 and S12 plays an important role in translational accuracy. The polypeptide is Small ribosomal subunit protein uS4 (Vesicomyosocius okutanii subsp. Calyptogena okutanii (strain HA)).